The chain runs to 465 residues: Methionine aminopeptidase 2-2 (465 aa).

The segment covering 1 to 13 (MGSKTPNDHRRGP) has biased composition (basic and acidic residues). The segment at 1-92 (MGSKTPNDHR…KKKTLLGGLQ (92 aa)) is disordered. Residues 44–55 (GETEDGEDEDDD) show a composition bias toward acidic residues. The span at 71 to 86 (TKKKNKRKKNKKKKKT) shows a compositional bias: basic residues. Residue His217 participates in substrate binding. The a divalent metal cation site is built by Asp238, Asp249, and His318. Substrate is bound at residue His326. Residues Glu351 and Glu446 each contribute to the a divalent metal cation site.

This sequence belongs to the peptidase M24A family. Methionine aminopeptidase eukaryotic type 2 subfamily. Co(2+) serves as cofactor. The cofactor is Zn(2+). Requires Mn(2+) as cofactor. It depends on Fe(2+) as a cofactor.

It is found in the cytoplasm. The catalysed reaction is Release of N-terminal amino acids, preferentially methionine, from peptides and arylamides.. Cotranslationally removes the N-terminal methionine from nascent proteins. The N-terminal methionine is often cleaved when the second residue in the primary sequence is small and uncharged (Met-Ala-, Cys, Gly, Pro, Ser, Thr, or Val). This is Methionine aminopeptidase 2-2 from Blastomyces gilchristii (strain SLH14081) (Blastomyces dermatitidis).